Consider the following 413-residue polypeptide: Multifunctional CCA protein (413 aa).

ATP is bound by residues G8 and R11. CTP is bound by residues G8 and R11. Mg(2+) is bound by residues D21 and D23. R91, R137, and R140 together coordinate ATP. Residues R91, R137, and R140 each coordinate CTP. An HD domain is found at 228 to 329 (TGVHTLMTLS…VKLFDAIDAW (102 aa)).

The protein belongs to the tRNA nucleotidyltransferase/poly(A) polymerase family. Bacterial CCA-adding enzyme type 1 subfamily. In terms of assembly, monomer. Can also form homodimers and oligomers. It depends on Mg(2+) as a cofactor. Ni(2+) serves as cofactor.

The enzyme catalyses a tRNA precursor + 2 CTP + ATP = a tRNA with a 3' CCA end + 3 diphosphate. It catalyses the reaction a tRNA with a 3' CCA end + 2 CTP + ATP = a tRNA with a 3' CCACCA end + 3 diphosphate. Its function is as follows. Catalyzes the addition and repair of the essential 3'-terminal CCA sequence in tRNAs without using a nucleic acid template. Adds these three nucleotides in the order of C, C, and A to the tRNA nucleotide-73, using CTP and ATP as substrates and producing inorganic pyrophosphate. tRNA 3'-terminal CCA addition is required both for tRNA processing and repair. Also involved in tRNA surveillance by mediating tandem CCA addition to generate a CCACCA at the 3' terminus of unstable tRNAs. While stable tRNAs receive only 3'-terminal CCA, unstable tRNAs are marked with CCACCA and rapidly degraded. This chain is Multifunctional CCA protein, found in Salmonella schwarzengrund (strain CVM19633).